The chain runs to 153 residues: UPF0756 membrane protein BCQ_4399 (153 aa).

4 helical membrane passes run 8–28 (FLFILLIIGLIAKNQSLTVAI), 54–74 (LGVTVITIAVLVPIATGEIGF), 87–107 (WIALASGVAVALLAKGGVQLL), and 117–137 (LVFGTIIAVALFNGVAVGPLI).

Belongs to the UPF0756 family.

Its subcellular location is the cell membrane. The polypeptide is UPF0756 membrane protein BCQ_4399 (Bacillus cereus (strain Q1)).